A 314-amino-acid chain; its full sequence is Olfactory receptor 4K2 (314 aa).

At 1-25 (MDVGNKSTMSEFVLLGLSNSWELQM) the chain is on the extracellular side. N-linked (GlcNAc...) asparagine glycosylation is present at asparagine 5. The chain crosses the membrane as a helical span at residues 26–49 (FFFMVFSLLYVATMVGNSLIVITV). Residues 50-57 (IVDPHLHS) lie on the Cytoplasmic side of the membrane. Residues 58–79 (PMYFLLTNLSIIDMSLASFATP) traverse the membrane as a helical segment. Residues 80–100 (KMITDYLTGHKTISFDGCLTQ) lie on the Extracellular side of the membrane. Cysteine 97 and cysteine 189 are joined by a disulfide. The helical transmembrane segment at 101–120 (IFFLHLFTGTEIILLMAMSF) threads the bilayer. The Cytoplasmic segment spans residues 121-139 (DRYIAICKPLHYASVISPQ). Residues 140–158 (VCVALVVASWIMGVMHSMS) traverse the membrane as a helical segment. At 159–195 (QVIFALTLPFCGPYEVDSFFCDLPVVFQLACVDTYVL) the chain is on the extracellular side. Residues 196 to 219 (GLFMISTSGIIALSCFIVLFNSYV) traverse the membrane as a helical segment. At 220 to 235 (IVLVTVKHHSSRGSSK) the chain is on the cytoplasmic side. The chain crosses the membrane as a helical span at residues 236-258 (ALSTCTAHFIVVFLFFGPCIFIY). Residues 259–269 (MWPLSSFLTDK) are Extracellular-facing. Residues 270-289 (ILSVFYTIFTPTLNPIIYTL) form a helical membrane-spanning segment. Topologically, residues 290–314 (RNQEVKIAMRKLKNRFLNFNKAMPS) are cytoplasmic.

It belongs to the G-protein coupled receptor 1 family.

The protein resides in the cell membrane. Odorant receptor. The chain is Olfactory receptor 4K2 (OR4K2) from Homo sapiens (Human).